Consider the following 487-residue polypeptide: Glutamate--tRNA ligase (487 aa).

The short motif at 13-23 (PSPTGLFHIGG) is the 'HIGH' region element. The 'KMSKS' region motif lies at 255-259 (KLSKR). K258 is a binding site for ATP.

Belongs to the class-I aminoacyl-tRNA synthetase family. Glutamate--tRNA ligase type 1 subfamily. In terms of assembly, monomer.

It is found in the cytoplasm. The catalysed reaction is tRNA(Glu) + L-glutamate + ATP = L-glutamyl-tRNA(Glu) + AMP + diphosphate. Functionally, catalyzes the attachment of glutamate to tRNA(Glu) in a two-step reaction: glutamate is first activated by ATP to form Glu-AMP and then transferred to the acceptor end of tRNA(Glu). This is Glutamate--tRNA ligase from Malacoplasma penetrans (strain HF-2) (Mycoplasma penetrans).